A 190-amino-acid polypeptide reads, in one-letter code: Large ribosomal subunit protein bL9 (190 aa).

The protein belongs to the bacterial ribosomal protein bL9 family.

Binds to the 23S rRNA. The polypeptide is Large ribosomal subunit protein bL9 (Methylorubrum populi (strain ATCC BAA-705 / NCIMB 13946 / BJ001) (Methylobacterium populi)).